The sequence spans 172 residues: RNA silencing suppressor p19 (172 aa).

2 stretches are compositionally biased toward basic and acidic residues: residues 1 to 14 and 150 to 172; these read MERAIQGSDVREQA and SEREGNVSRRRPEGTEAFKEESE. Disordered stretches follow at residues 1-34 and 145-172; these read MERAIQGSDVREQADSECWDGGGGGTTSPFKLPD and LQPTPSEREGNVSRRRPEGTEAFKEESE.

It belongs to the tombusvirus protein p19 family. As to quaternary structure, homodimer.

Viral suppressor of RNA silencing which binds specifically to silencing RNAs (siRNAs). Acts as a molecular caliper to specifically select siRNAs based on the length of the duplex region of the RNA. The chain is RNA silencing suppressor p19 from Cymbidium ringspot virus (CymRSV).